Consider the following 1733-residue polypeptide: Serine-aspartate repeat-containing protein F (1733 aa).

Residues 1 to 45 (MKKRRQGPINKRVDFLSNKVNKYSIRKFTVGTASILVGATLMFGA) form the signal peptide. The ligand binding A region stretch occupies residues 46–678 (ADNEAKAAED…GSSTAQGDNP (633 aa)). 2 disordered regions span residues 51-269 (KAAE…SVND) and 332-351 (PLAL…ASPR). The segment covering 61–74 (ASKEEQKGSRDNEN) has biased composition (basic and acidic residues). Polar residues-rich tracts occupy residues 85 to 99 (GSHS…NNAT) and 146 to 168 (PKTS…DNLN). Basic and acidic residues predominate over residues 175 to 184 (KESKTDEHST). Polar residues predominate over residues 186 to 226 (QAQMSTNKSNLDTNDSPTQSEKTSSQANNDSTDNQSAPSKQ). Positions 227 to 253 (LDSKPSEQKVYKTKFNDEPTQDVEHTT) are enriched in basic and acidic residues. Polar residues-rich tracts occupy residues 255 to 266 (KLKTPSVSTDSS) and 336 to 346 (NRSQSKNSPHK). CNA-B domains lie at 679–797 (TYSL…YLTP), 798–907 (KYNV…FYKP), 908–1018 (TYNL…YKTP), and 1019–1129 (KYSV…FDDD). Residues 679–1129 (TYSLGDYVWL…SIDNGYFDDD (451 aa)) are type I collagen binding region. The disordered stretch occupies residues 862–890 (FETPEGYTPTKQNSGSDEGKDSNGTKTTV). The interval 1085-1708 (KPEGMTQTTA…ANEDHDSKGT (624 aa)) is disordered. The span at 1107–1119 (EDVRVTITDHDDF) shows a compositional bias: basic and acidic residues. Residues 1125-1684 (YFDDDSDSDS…DSDSDSDSDS (560 aa)) are compositionally biased toward acidic residues. Residues 1685–1706 (DSDKNAKDKLPDTGANEDHDSK) are compositionally biased toward basic and acidic residues. Positions 1694-1698 (LPDTG) match the LPXTG sorting signal motif. At threonine 1697 the chain carries Pentaglycyl murein peptidoglycan amidated threonine. The propeptide at 1698-1733 (GANEDHDSKGTLLGTLFAGLGALLLGRRRKKDNKEK) is removed by sortase.

This sequence belongs to the serine-aspartate repeat-containing protein (SDr) family.

The protein localises to the secreted. It is found in the cell wall. Functionally, binds to type I collagen via alpha-2(I) or alpha-1(I) chains, although its affinity for the alpha-1(I) chain is significantly higher. Involved in bacterial adherence to transcutaneous drivelines from explanted ventricular assist devices. This is Serine-aspartate repeat-containing protein F (sdrF) from Staphylococcus epidermidis.